The chain runs to 20 residues: Neurotoxin BmK 18(2) (20 aa).

Residues R2–A20 enclose the LCN-type CS-alpha/beta domain.

This sequence belongs to the long (4 C-C) scorpion toxin superfamily. Sodium channel inhibitor family. Alpha subfamily. In terms of tissue distribution, expressed by the venom gland.

The protein localises to the secreted. Functionally, binds to sodium channels (Nav) and inhibits the inactivation of the activated channels, thereby blocking neuronal transmission. The protein is Neurotoxin BmK 18(2) of Olivierus martensii (Manchurian scorpion).